Consider the following 76-residue polypeptide: Horsegram inhibitor 1 (76 aa).

7 disulfides stabilise this stretch: Cys-16/Cys-70, Cys-17/Cys-32, Cys-20/Cys-66, Cys-22/Cys-30, Cys-40/Cys-47, Cys-44/Cys-59, and Cys-49/Cys-57.

Belongs to the Bowman-Birk serine protease inhibitor family. HGI-III exists in a state of equilibrium between monomer, homodimer and trimer, with homodimer being the predominant form. The homodimer is stabilized by the non-covalent interaction between Lys-24 of one subunit and Asp-76 of the other subunit. The homodimer is more thermostable than the monomer. HGGI-I, HGGI-II and HGGI-III exist as monomers. HGGI-I, HGGI-II and HGGI-III are produced by proteolysis of the N- and C-termini of HGI-III.

Its function is as follows. Inhibitors of trypsin and chymotrypsin. HGGI-III has a higher activity than HGGI-I or HGGI-II. The protein is Horsegram inhibitor 1 of Vigna unguiculata subsp. cylindrica (Horse gram).